We begin with the raw amino-acid sequence, 72 residues long: Large ribosomal subunit protein bL28 (72 aa).

The protein belongs to the bacterial ribosomal protein bL28 family.

In Pelodictyon phaeoclathratiforme (strain DSM 5477 / BU-1), this protein is Large ribosomal subunit protein bL28.